The following is a 313-amino-acid chain: Aspartate carbamoyltransferase catalytic subunit (313 aa).

The carbamoyl phosphate site is built by arginine 59 and threonine 60. Residue lysine 87 coordinates L-aspartate. Arginine 109, histidine 137, and glutamine 140 together coordinate carbamoyl phosphate. L-aspartate-binding residues include arginine 170 and arginine 224. Carbamoyl phosphate is bound by residues glycine 265 and proline 266.

This sequence belongs to the aspartate/ornithine carbamoyltransferase superfamily. ATCase family. In terms of assembly, heterododecamer (2C3:3R2) of six catalytic PyrB chains organized as two trimers (C3), and six regulatory PyrI chains organized as three dimers (R2).

It carries out the reaction carbamoyl phosphate + L-aspartate = N-carbamoyl-L-aspartate + phosphate + H(+). It participates in pyrimidine metabolism; UMP biosynthesis via de novo pathway; (S)-dihydroorotate from bicarbonate: step 2/3. Its function is as follows. Catalyzes the condensation of carbamoyl phosphate and aspartate to form carbamoyl aspartate and inorganic phosphate, the committed step in the de novo pyrimidine nucleotide biosynthesis pathway. This Sinorhizobium medicae (strain WSM419) (Ensifer medicae) protein is Aspartate carbamoyltransferase catalytic subunit.